We begin with the raw amino-acid sequence, 440 residues long: Thymidine phosphorylase (440 aa).

This sequence belongs to the thymidine/pyrimidine-nucleoside phosphorylase family. As to quaternary structure, homodimer.

The enzyme catalyses thymidine + phosphate = 2-deoxy-alpha-D-ribose 1-phosphate + thymine. Its pathway is pyrimidine metabolism; dTMP biosynthesis via salvage pathway; dTMP from thymine: step 1/2. The enzymes which catalyze the reversible phosphorolysis of pyrimidine nucleosides are involved in the degradation of these compounds and in their utilization as carbon and energy sources, or in the rescue of pyrimidine bases for nucleotide synthesis. The polypeptide is Thymidine phosphorylase (Escherichia coli (strain 55989 / EAEC)).